Here is a 541-residue protein sequence, read N- to C-terminus: Protein wntless homolog (541 aa).

Residues 1–15 (MAGAIIENMSTKKLC) lie on the Cytoplasmic side of the membrane. Residues 16 to 36 (IVGGILLVFQIVAFLVGGLIA) form a helical membrane-spanning segment. Residues 37–232 (PAPTTAVPYT…GIHQNGGFTK (196 aa)) lie on the Lumenal side of the membrane. The tract at residues 101 to 232 (MEMSPWFQFM…GIHQNGGFTK (132 aa)) is interaction with Wnt proteins. A helical transmembrane segment spans residues 233–253 (VWFAMKTFLTPSIFIIMVWYW). Residues 254–268 (RRITMMSRPPVLLEK) are Cytoplasmic-facing. Residues 269 to 289 (VIFALGISMTFINIPVEWFSI) traverse the membrane as a helical segment. Residues 290 to 303 (GFDWTWMLLFGDIR) lie on the Lumenal side of the membrane. The helical transmembrane segment at 304 to 324 (QGIFYAMLLSFWIIFCGEHMM) threads the bilayer. Over 325 to 331 (DQHERNH) the chain is Cytoplasmic. A helical transmembrane segment spans residues 332 to 352 (IAGYWKQVGPIAVGSFCLFIF). The Lumenal portion of the chain corresponds to 353 to 380 (DMCERGVQLTNPFYSIWTTDVGTELAMA). Residues 381 to 401 (FIIVAGICLCLYFLFLCFMVF) traverse the membrane as a helical segment. At 402-431 (QVFRNISGKQSSLPAMSKVRRLHYEGLIFR) the chain is on the cytoplasmic side. Residues 432-452 (FKFLMLITLACAAMTVIFFIV) form a helical membrane-spanning segment. The Lumenal segment spans residues 453-471 (SQVSEGHWKWGGVTVQVSS). A helical transmembrane segment spans residues 472-492 (AFFTGIYGMWNLYVFALMFLY). Topologically, residues 493-541 (APSHKNYGEDQSNGDLGVHSGEELQLTTTITHVDGPTEIYKLTRKEAQE) are cytoplasmic.

The protein belongs to the wntless family. In terms of assembly, interacts with WNT3A. Interacts with WNT1, WNT3 and WNT5. N-glycosylated. In terms of tissue distribution, expressed in the brain, skeletal muscle, heart muscle, lung, gut, liver, and kidney (at protein level). In the brain, expressed in the cortex, striatum, hippocampus and to a lesser extent in the cerebellum (at protein level). Expressed in kidney, lung, skin, intestine, brain, spinal cord, skeleton, eyes, excretion glands, tooth and palatal shelves. In the cerebellum, expressed in Purkinje cells.

The protein resides in the golgi apparatus membrane. Its subcellular location is the cytoplasmic vesicle membrane. It localises to the cell membrane. It is found in the endoplasmic reticulum membrane. The protein localises to the early endosome membrane. Functionally, regulates Wnt proteins sorting and secretion in a feedback regulatory mechanism. This reciprocal interaction plays a key role in the regulation of expression, subcellular location, binding and organelle-specific association of Wnt proteins. Also plays an important role in establishment of the anterior-posterior body axis formation during development. The protein is Protein wntless homolog (Wls) of Mus musculus (Mouse).